Consider the following 347-residue polypeptide: DNA polymerase III subunit delta (347 aa).

This sequence belongs to the DNA polymerase HolA subunit family. As to quaternary structure, component of the DNA clamp loading complex consisting of tau(3):delta(1):delta'(1). The DNA polymerase III holoenzyme complex contains at least 10 different subunits organized into 3 functionally essential subassemblies: the Pol III core, the beta sliding clamp processivity factor and the clamp-loading complex. The Pol III core (subunits alpha, epsilon and theta) contains the polymerase and the 3'-5' exonuclease proofreading activities. The polymerase is tethered to the template via the dimeric beta sliding clamp processivity factor. The DNA clamp-loading complex assembles the beta sliding clamp onto the primed template and plays a central role in the organization and communication at the replication fork.

The protein localises to the cytoplasm. Its subcellular location is the nucleoid. It catalyses the reaction DNA(n) + a 2'-deoxyribonucleoside 5'-triphosphate = DNA(n+1) + diphosphate. Functionally, part of the beta sliding clamp loading complex, which hydrolyzes ATP to load the beta clamp onto primed DNA to form the DNA replication pre-initiation complex. DNA polymerase III is a complex, multichain enzyme responsible for most of the replicative synthesis in bacteria. This DNA polymerase also exhibits 3'-5' exonuclease activity. The delta subunit is the wrench that will open the beta subunit dimer. The DNA clamp loading complex (tau(3),delta,delta') is thought to load beta dimers onto DNA by binding ATP which alters the complex's conformation so it can bind beta sliding clamp dimers and open them at one interface. Primed DNA is recognized, ATP is hydrolyzed releasing the clamp loading complex and closing the beta sliding clamp ring around the primed DNA. The chain is DNA polymerase III subunit delta from Bacillus subtilis (strain 168).